We begin with the raw amino-acid sequence, 170 residues long: Acireductone dioxygenase (170 aa).

The Fe(2+) site is built by His-99, His-101, Glu-105, and His-144. Ni(2+) contacts are provided by His-99, His-101, Glu-105, and His-144.

It belongs to the acireductone dioxygenase (ARD) family. In terms of assembly, monomer. Fe(2+) serves as cofactor. Requires Ni(2+) as cofactor.

The catalysed reaction is 1,2-dihydroxy-5-(methylsulfanyl)pent-1-en-3-one + O2 = 3-(methylsulfanyl)propanoate + CO + formate + 2 H(+). It catalyses the reaction 1,2-dihydroxy-5-(methylsulfanyl)pent-1-en-3-one + O2 = 4-methylsulfanyl-2-oxobutanoate + formate + 2 H(+). The protein operates within amino-acid biosynthesis; L-methionine biosynthesis via salvage pathway; L-methionine from S-methyl-5-thio-alpha-D-ribose 1-phosphate: step 5/6. Catalyzes 2 different reactions between oxygen and the acireductone 1,2-dihydroxy-3-keto-5-methylthiopentene (DHK-MTPene) depending upon the metal bound in the active site. Fe-containing acireductone dioxygenase (Fe-ARD) produces formate and 2-keto-4-methylthiobutyrate (KMTB), the alpha-ketoacid precursor of methionine in the methionine recycle pathway. Ni-containing acireductone dioxygenase (Ni-ARD) produces methylthiopropionate, carbon monoxide and formate, and does not lie on the methionine recycle pathway. The polypeptide is Acireductone dioxygenase (Bacillus anthracis).